A 387-amino-acid polypeptide reads, in one-letter code: 3-ketoacyl-CoA thiolase (387 aa).

C91 functions as the Acyl-thioester intermediate in the catalytic mechanism. Catalysis depends on proton acceptor residues H343 and C373.

The protein belongs to the thiolase-like superfamily. Thiolase family. In terms of assembly, heterotetramer of two alpha chains (FadB) and two beta chains (FadA).

The protein localises to the cytoplasm. It catalyses the reaction an acyl-CoA + acetyl-CoA = a 3-oxoacyl-CoA + CoA. It functions in the pathway lipid metabolism; fatty acid beta-oxidation. Functionally, catalyzes the final step of fatty acid oxidation in which acetyl-CoA is released and the CoA ester of a fatty acid two carbons shorter is formed. The sequence is that of 3-ketoacyl-CoA thiolase from Shewanella frigidimarina (strain NCIMB 400).